The chain runs to 327 residues: Malate dehydrogenase (327 aa).

11–17 (GAAGQIA) lines the NAD(+) pocket. Substrate-binding residues include arginine 92 and arginine 98. Residues asparagine 105, glutamine 112, and 129–131 (VGN) contribute to the NAD(+) site. Residues asparagine 131 and arginine 162 each contribute to the substrate site. The Proton acceptor role is filled by histidine 187.

It belongs to the LDH/MDH superfamily. MDH type 2 family.

The catalysed reaction is (S)-malate + NAD(+) = oxaloacetate + NADH + H(+). In terms of biological role, catalyzes the reversible oxidation of malate to oxaloacetate. The chain is Malate dehydrogenase from Nitrosospira multiformis (strain ATCC 25196 / NCIMB 11849 / C 71).